The following is a 62-amino-acid chain: Short neurotoxin A (62 aa).

The segment covering 1–16 (RRCFNHPSSQPQTNKS) has biased composition (polar residues). Residues 1–21 (RRCFNHPSSQPQTNKSCPPGE) form a disordered region. Cystine bridges form between Cys3-Cys24, Cys17-Cys41, Cys43-Cys54, and Cys55-Cys60.

Belongs to the three-finger toxin family. Short-chain subfamily. Type I alpha-neurotoxin sub-subfamily. As to expression, expressed by the venom gland.

Its subcellular location is the secreted. Functionally, binds to muscle nicotinic acetylcholine receptor (nAChR) and inhibit acetylcholine from binding to the receptor, thereby impairing neuromuscular transmission. The sequence is that of Short neurotoxin A from Laticauda crockeri (Crocker's sea snake).